We begin with the raw amino-acid sequence, 349 residues long: Terpene synthase 2 (349 aa).

The DDxx(x)D/E motif signature appears at 84-89 (DDLFDG). Residues 229-237 (NDCVSYEKE) carry the NDxxSxxxD/E motif motif.

This sequence belongs to the terpene synthase family.

It carries out the reaction (2E,6E)-farnesyl diphosphate = (3S)-(+)-asterisca-2(9),6-diene + diphosphate. The catalysed reaction is (2E)-geranyl diphosphate = (Z)-beta-ocimene + diphosphate. It catalyses the reaction (2E)-geranyl diphosphate + H2O = linalool + diphosphate. Terpene synthase that converts its substrate farnesyl diphosphate (FPP) into the sesquiterpene (3S)-(+)-asterisca-2(9),6-diene. Is also able to convert geranyl diphosphate (GPP) into a mixture of monoterpenes including (Z)-beta-ocimene, allo-ocimene and linalool. In Dictyostelium discoideum (Social amoeba), this protein is Terpene synthase 2.